Consider the following 171-residue polypeptide: UPF0398 protein M28_Spy1394 (171 aa).

Belongs to the UPF0398 family.

In Streptococcus pyogenes serotype M28 (strain MGAS6180), this protein is UPF0398 protein M28_Spy1394.